The sequence spans 196 residues: Peptide deformylase (196 aa).

Fe cation is bound by residues Cys-105 and His-147. Glu-148 is a catalytic residue. His-151 provides a ligand contact to Fe cation.

Belongs to the polypeptide deformylase family. It depends on Fe(2+) as a cofactor.

The enzyme catalyses N-terminal N-formyl-L-methionyl-[peptide] + H2O = N-terminal L-methionyl-[peptide] + formate. In terms of biological role, removes the formyl group from the N-terminal Met of newly synthesized proteins. Requires at least a dipeptide for an efficient rate of reaction. N-terminal L-methionine is a prerequisite for activity but the enzyme has broad specificity at other positions. This Christiangramia forsetii (strain DSM 17595 / CGMCC 1.15422 / KT0803) (Gramella forsetii) protein is Peptide deformylase.